The chain runs to 162 residues: MLPLHISLEKKKVVIAGGGSIALRRLKTVISEGADITLVSPDVEPEIKQMAEERRIKWEKRTIEKEDYLNAFFIIAATDNAAVNKEIAQSASPFQLVNCVSDAELGNVYMPKIVKRGHVTVSVSTSGASPKHTKELAENVDKLIDGDFVAEVNRLYQMRRKK.

NAD(+)-binding positions include 20–21 and 41–42; these read SI and PD.

This sequence belongs to the precorrin-2 dehydrogenase / sirohydrochlorin ferrochelatase family.

The enzyme catalyses precorrin-2 + NAD(+) = sirohydrochlorin + NADH + 2 H(+). It participates in cofactor biosynthesis; adenosylcobalamin biosynthesis; sirohydrochlorin from precorrin-2: step 1/1. The protein operates within porphyrin-containing compound metabolism; siroheme biosynthesis; sirohydrochlorin from precorrin-2: step 1/1. Catalyzes the dehydrogenation of precorrin-2 to form sirohydrochlorin which is used as a precursor in both siroheme biosynthesis and in the anaerobic branch of adenosylcobalamin biosynthesis. This chain is Precorrin-2 dehydrogenase (sirC), found in Bacillus subtilis (strain 168).